The primary structure comprises 837 residues: MAGSGGPIGSGALTGGVRSKVAPSVDFDHSCSDSVEYLTLNFGPFETVHRWRRLPPCDEFVGARRSKHTVVAYKDAIYVFGGDNGKTMLNDLLRFDVKDCSWCRAFTTGTPPAPRYHHSAVVYGSSMFVFGGYTGDIYSNSNLKNKNDLFEYKFATGQWTEWKIEGRLPVARSAHGATVYSDKLWIFAGYDGNARLNDMWTIGLQDRELTCWEEVAQSGEIPPSCCNFPVAVCRDKMFVFSGQSGAKITNNLFQFEFKDKTWTRIPTEHLLRGSPPPPQRRYGHTMVAFDRHLYVFGGAADNTLPNELHCYDVDFQTWEVVQPSSDSEVGGAEMPERASSSEDASTLTSEERSSFKKSRDVFGLDFGTTSAKQPVHLASELPSGRLFHAAAVISDAMYIFGGTVDNNIRSGEMYRFQFSCYPKCTLHEDYGRLWEGRQFCDVEFVLGEKEECVQGHVAIVTARSRWLRRKIVQAQEWLAQKLEEDGALAPKEAPGPAVGRARPPLLRVAIREAEARPFEVLMQFLYTDKIKYPRKGHVEDVLLIMDVYKLALSFQLCRLEQLCRQYIEASVDLQNVLVVCESAARLQLGQLKEHCLNFIVKESHFNQVIMMKEFERLSSPLIVEIVRRKQQPPPRTPSDQPVDIGTSLIQDMKAYLEGAGSEFCDITLLLDGQPRPAHKAILAARSSYFEAMFRSFMPEDGQVNISIGEMVPSRQAFESMLRYIYYGEVNMPPEDSLYLFAAPYYYGFYNNRLQAYCKQNLEMNVTVQNVLQILEAADKTQALDMKRHCLHIIVHQFTKVSKLPTLRLLSQQLLLDIIDSLASHISDKQCAELGADI.

The residue at position 2 (Ala2) is an N-acetylalanine. Kelch repeat units follow at residues 76 to 125 (AIYV…VYGS), 127 to 182 (MFVF…VYSD), 184 to 235 (LWIF…VCRD), 236 to 282 (KMFV…QRRY), 292 to 338 (HLYV…PERA), and 396 to 447 (AMYI…FVLG). The segment at 324–352 (SSDSEVGGAEMPERASSSEDASTLTSEER) is disordered. BTB domains follow at residues 440 to 534 (CDVE…KYPR) and 664 to 733 (CDIT…NMPP).

It belongs to the LZTR1 family. As to quaternary structure, homodimer. Component of the BCR(LZTR1) E3 ubiquitin ligase complex, at least composed of CUL3, LZTR1 and RBX1. Interacts with Ras (K-Ras/KRAS, N-Ras/NRAS and H-Ras/HRAS). Interacts with RAF1. Interacts with SHOC2. Interacts with PPP1CB. Phosphorylated on tyrosine upon induction of apoptosis, leading to its degradation by the proteasome. Widely expressed.

Its subcellular location is the endomembrane system. The protein localises to the recycling endosome. The protein resides in the golgi apparatus. The protein operates within protein modification; protein ubiquitination. In terms of biological role, substrate-specific adapter of a BCR (BTB-CUL3-RBX1) E3 ubiquitin-protein ligase complex that mediates ubiquitination of Ras (K-Ras/KRAS, N-Ras/NRAS and H-Ras/HRAS). Is a negative regulator of RAS-MAPK signaling that acts by controlling Ras levels and decreasing Ras association with membranes. The sequence is that of Leucine-zipper-like transcriptional regulator 1 from Mus musculus (Mouse).